The sequence spans 294 residues: Dof zinc finger protein DOF4.1 (294 aa).

The Dof-type zinc finger occupies 68 to 122 (RNCPRCNSSNTKFCYYNNYSLAQPRYLCKSCRRYWTEGGSLRNVPVGGGSRKNKK). Residues Cys70, Cys73, Cys95, and Cys98 each coordinate Zn(2+). Disordered regions lie at residues 109 to 178 (RNVP…DKRA) and 247 to 294 (MYPY…GPTW). Polar residues-rich tracts occupy residues 126 to 136 (PNSSTSSSTKN) and 157 to 173 (KTHQ…SSPM). Over residues 251–273 (GDHEDRQQHHHVRHDDGNKKREG) the composition is skewed to basic and acidic residues. Residues 284 to 294 (ILGGDSGGPTW) show a composition bias toward gly residues.

It is found in the nucleus. In terms of biological role, transcription factor that binds specifically to a 5'-AA[AG]G-3' consensus core sequence. The chain is Dof zinc finger protein DOF4.1 (DOF4.1) from Arabidopsis thaliana (Mouse-ear cress).